Reading from the N-terminus, the 249-residue chain is Undecaprenyl-diphosphatase (249 aa).

Helical transmembrane passes span 11-31 (GLTEFLPVSSSGHLAIFTAIF), 35-55 (PDVGYFAFLHLATFLAVVIFV), 74-94 (ITLSLKLFVSMIPAAIVGIFF), 101-121 (IFSETFFIGVFLAITGVFMLL), 135-155 (IPYLDAFIIGIFQAFSVLPGI), 175-195 (AVKYSFLMSLPVIFGAGVLEM), 208-228 (FIVAFLTGILGLHLLKKMVIA), and 229-249 (GKLKFFGYYCFLASLFVIFYI).

Belongs to the UppP family.

It localises to the cell membrane. It carries out the reaction di-trans,octa-cis-undecaprenyl diphosphate + H2O = di-trans,octa-cis-undecaprenyl phosphate + phosphate + H(+). Catalyzes the dephosphorylation of undecaprenyl diphosphate (UPP). The sequence is that of Undecaprenyl-diphosphatase from Methanococcus vannielii (strain ATCC 35089 / DSM 1224 / JCM 13029 / OCM 148 / SB).